The chain runs to 253 residues: DNA repair protein RecO (253 aa).

This sequence belongs to the RecO family.

Its function is as follows. Involved in DNA repair and RecF pathway recombination. This Streptococcus agalactiae serotype III (strain NEM316) protein is DNA repair protein RecO.